Here is a 257-residue protein sequence, read N- to C-terminus: Glucose-1-phosphate cytidylyltransferase (257 aa).

Substrate-binding positions include 6–10, 11–13, lysine 23, serine 104, arginine 109, and glycine 128; these read LAGGL and GTR. The Mg(2+) site is built by aspartate 129 and aspartate 234.

Belongs to the glucose-1-phosphate cytidylyltransferase family. As to quaternary structure, homohexamer. It depends on Mg(2+) as a cofactor.

The catalysed reaction is alpha-D-glucose 1-phosphate + CTP + H(+) = CDP-D-glucose + diphosphate. It participates in nucleotide-sugar biosynthesis; CDP-3,6-dideoxy-D-mannose biosynthesis; CDP-3,6-dideoxy-D-mannose from CTP and alpha-D-glucose 1-phosphate: step 1/5. It functions in the pathway bacterial outer membrane biogenesis; LPS O-antigen biosynthesis. Functionally, involved in the biosynthesis of the tyvelose, a 3,6-dideoxyhexose found in the O-antigen of the surface lipopolysaccharides. It catalyzes the transfer of a CMP moiety from CTP to glucose 1-phosphate. This is Glucose-1-phosphate cytidylyltransferase (rfbF) from Salmonella typhimurium (strain LT2 / SGSC1412 / ATCC 700720).